Reading from the N-terminus, the 1070-residue chain is MLGSGNEEMSTLPGLNQIQLEGFCRFIDRGLTEGLFKFPKIEDTDQEIEFQLFAETYQLLEPLINEKDAVYESLTYSAELYVSTGLIWKSSRDIKKQTIFVGNIPLMNSLGTSIVNGIYRIVINQILQSPGIYYRSELDPNGISVYTGTIISDWGGRLELEIDKKARIWARVSRKQKISILILLSAMGSNLSEILENVCYPEIFVSFLNDKDKKKIGSKENAILEFYRQFACVGGDPVFSESLWKELQKKFFQQRCELGRIGRRNMNQKLNLDIPQNNTFLLPRDILTAASHLIGMKFGMALLDDINHLKNKRIRSVADLLQDQFGLALVRLENMVRGTICGAIRHKLIPTPQNLVTSTPLTTTYESFFGLHPLSQVLDQTNPLTEIVHGRKLSYLGPGGLTGRTASFRIRDIHPSHYGRICPIDTSEGINVGLIGSLAIHARIGIWGAIESPFFEISERSKRIRMLYLSPSIDEYYMVATGNSLALTRDIQEEQIVPARYRQEFLTIAWEQVHLRSIYPFQYFSIGASLIPFIEHNDANRALMSSNMQRQAVPLSQSEKCIVGTGLECQVALDSGVSAIADHEGNIVYTDTDRIFLFVNGDTLSIPLTIYQRSNKNTCMHQKPQVHRGKFIKKGQILADGAATVGGELALGKNVLVAYMPWEGYNSEDAVLISERLVYEDIFTSFHIRKYEIQTHMTSYGSERITNKIPHLEANLLRNLDKNGIVILGSWVETGDVLVGKLTPQMAKESSYSPEDRLLRAILGIQVSTSKETCLKLPIGGRGRVIDVRWIQKKGGSSYNPETIRISILQKREIKVGDKVAGRHGNKGIVSKILSRQDMPYLQDGEPVDMVFNPLGVPSRMNVGQIFECSLGLSGGMLDKHYRITPFDERYEQEASRKLVFSELYEASKKTSNPWIFEPEYPGKSKIFDGRTGNSFKQPAIMGKTYILKLIHQVDDKIHGRSSGHYALVTQQPLRGRAKQGGQRVGEMEVWALEGFGVAHILQEMLTYKSDHIKTRQEVLGTTIIGGTIPKPTDAPESFRLLVRELRSLAMELNHFLVSEKNFRIHRKEA.

It belongs to the RNA polymerase beta chain family. In terms of assembly, in plastids the minimal PEP RNA polymerase catalytic core is composed of four subunits: alpha, beta, beta', and beta''. When a (nuclear-encoded) sigma factor is associated with the core the holoenzyme is formed, which can initiate transcription.

It is found in the plastid. The protein localises to the chloroplast. It carries out the reaction RNA(n) + a ribonucleoside 5'-triphosphate = RNA(n+1) + diphosphate. Its function is as follows. DNA-dependent RNA polymerase catalyzes the transcription of DNA into RNA using the four ribonucleoside triphosphates as substrates. The protein is DNA-directed RNA polymerase subunit beta of Phaseolus vulgaris (Kidney bean).